The primary structure comprises 173 residues: Photosystem I assembly protein Ycf3 (173 aa).

TPR repeat units follow at residues 35 to 68 (AYIY…EENK), 72 to 105 (GETL…NPKQ), and 120 to 153 (GRFA…YPGG).

It belongs to the Ycf3 family.

Its subcellular location is the cellular thylakoid membrane. Functionally, essential for the assembly of the photosystem I (PSI) complex. May act as a chaperone-like factor to guide the assembly of the PSI subunits. This Prochlorococcus marinus subsp. pastoris (strain CCMP1986 / NIES-2087 / MED4) protein is Photosystem I assembly protein Ycf3.